A 355-amino-acid polypeptide reads, in one-letter code: Proto-oncogene Wnt-3 (355 aa).

A signal peptide spans 1 to 21 (MEPHLLGLLLGLLLSGTRVLA). 11 disulfide bridges follow: cysteine 80–cysteine 91, cysteine 131–cysteine 139, cysteine 141–cysteine 158, cysteine 206–cysteine 220, cysteine 208–cysteine 215, cysteine 284–cysteine 315, cysteine 300–cysteine 310, cysteine 314–cysteine 354, cysteine 330–cysteine 345, cysteine 332–cysteine 342, and cysteine 337–cysteine 338. Asparagine 90 carries N-linked (GlcNAc...) asparagine glycosylation. Serine 212 carries the O-palmitoleoyl serine; by PORCN lipid modification. Asparagine 301 is a glycosylation site (N-linked (GlcNAc...) asparagine).

The protein belongs to the Wnt family. In terms of assembly, forms a soluble 1:1 complex with AFM; this prevents oligomerization and is required for prolonged biological activity. The complex with AFM may represent the physiological form in body fluids. Interacts with PORCN. Interacts with WLS. Palmitoleoylation is required for efficient binding to frizzled receptors. Depalmitoleoylation leads to Wnt signaling pathway inhibition. In terms of tissue distribution, detected at low levels in adult brain. Dorsal portion of the neural tube, dorsal ectoderm, the branchial arches, and the limb buds.

It is found in the secreted. The protein resides in the extracellular space. The protein localises to the extracellular matrix. In terms of biological role, ligand for members of the frizzled family of seven transmembrane receptors. Functions in the canonical Wnt signaling pathway that results in activation of transcription factors of the TCF/LEF family. Required for normal gastrulation, formation of the primitive streak, and for the formation of the mesoderm during early embryogenesis. Required for normal formation of the apical ectodermal ridge and for normal embryonic limb development. The chain is Proto-oncogene Wnt-3 (Wnt3) from Mus musculus (Mouse).